The following is a 548-amino-acid chain: Rhotekin (548 aa).

The 76-residue stretch at 10–85 (DLNMLYIRQM…LQRRKEAQVL (76 aa)) folds into the REM-1 domain. S22 and S93 each carry phosphoserine. The segment at 83-103 (QVLGKTGRRPSDSVQPPERSP) is disordered. Asymmetric dimethylarginine is present on R217. Position 219 is a phosphoserine (S219). A PH domain is found at 296-403 (QPTASGTLRV…WMEALWQLFL (108 aa)). S504, S513, and S528 each carry phosphoserine. Residues 506–548 (DAVPADHSLGPSRSVAPLPPQRSPQSRGFYSKSQLSTWLQSPV) form a disordered region. Residues 528–548 (SPQSRGFYSKSQLSTWLQSPV) show a composition bias toward polar residues.

In terms of assembly, interacts via its C-terminal region with the TAX1BP3 PDZ domain. This interaction facilitates Rho-mediated activation of the c-Fos serum response element (SRE). Interacts with SEPT9. Specifically binds to GTP-bound RHOA, RHOB and RHOC and inhibits their GTPase activity.

Its function is as follows. Mediates Rho signaling to activate NF-kappa-B and may confer increased resistance to apoptosis to cells in gastric tumorigenesis. May play a novel role in the organization of septin structures. In Rattus norvegicus (Rat), this protein is Rhotekin.